A 248-amino-acid chain; its full sequence is 14-3-3 protein zeta (248 aa).

Belongs to the 14-3-3 family. As to quaternary structure, homodimer; homodimerization is not essential for modulating the activity of Slo. Interacts with phosphorylated Slob; the interaction with Slob mediates an indirect interaction with Slo. Interacts with phosphorylated yki. Interacts with hemo; this represses 14-3-3zeta activity which prevents the 14-3-3zeta-mediated activation of phosphoinositide 3-kinase Pi3K68D. This, in turn, inhibits the Pi3K68D-mediated conversion of phosphatidylinositol to phosphatidylinositol-3-phosphate and prevents progression of early endosomes through the maturation process which regulates subsequent steps of phagocytic processing. Interacts with REPTOR (when phosphorylated), this interaction may assist the cytoplasmic retention of REPTOR. As to expression, predominantly expressed in the ventral nerve cord of the embryo, and in the neural tissues of the head. Also found in the region posterior to the morphogenetic furrow of the eye imaginal disk where cells differentiate as photoreceptors.

The protein resides in the cytoplasm. It is found in the early endosome. Required in Raf-dependent cell proliferation and photoreceptor differentiation during eye development. Acts upstream of Raf and downstream of Ras, and is essential for viability. Acts as a negative regulator of the slo calcium channel via its interaction with slo-binding protein slob. Inhibits yki activity by restricting its nuclear localization. Binds to and promotes the activity of phosphoinositide 3-kinase Pi3K68D which converts phosphatidylinositol to phosphatidylinositol-3-phosphate and promotes maturation of early endosomes. This Drosophila melanogaster (Fruit fly) protein is 14-3-3 protein zeta (14-3-3zeta).